The following is a 247-amino-acid chain: Carboxy-S-adenosyl-L-methionine synthase (247 aa).

S-adenosyl-L-methionine-binding positions include Y40, 65 to 67 (GAS), 90 to 91 (DN), 122 to 123 (DI), N137, and R204.

The protein belongs to the class I-like SAM-binding methyltransferase superfamily. Cx-SAM synthase family. As to quaternary structure, homodimer.

The enzyme catalyses prephenate + S-adenosyl-L-methionine = carboxy-S-adenosyl-L-methionine + 3-phenylpyruvate + H2O. In terms of biological role, catalyzes the conversion of S-adenosyl-L-methionine (SAM) to carboxy-S-adenosyl-L-methionine (Cx-SAM). The polypeptide is Carboxy-S-adenosyl-L-methionine synthase (Pseudomonas putida (strain W619)).